A 349-amino-acid polypeptide reads, in one-letter code: Homoserine O-succinyltransferase (349 aa).

Residue Cys146 is the Acyl-thioester intermediate of the active site. The substrate site is built by Lys167 and Ser196. His239 serves as the catalytic Proton acceptor. The active site involves Glu241. Arg253 contacts substrate.

It belongs to the MetA family.

Its subcellular location is the cytoplasm. It catalyses the reaction L-homoserine + succinyl-CoA = O-succinyl-L-homoserine + CoA. It functions in the pathway amino-acid biosynthesis; L-methionine biosynthesis via de novo pathway; O-succinyl-L-homoserine from L-homoserine: step 1/1. Transfers a succinyl group from succinyl-CoA to L-homoserine, forming succinyl-L-homoserine. In vitro, can also use glutaryl-CoA as acyl donor. The protein is Homoserine O-succinyltransferase of Thiobacillus denitrificans (strain ATCC 25259 / T1).